The chain runs to 367 residues: Glutamate 5-kinase (367 aa).

Lysine 10 is an ATP binding site. Substrate is bound by residues serine 50, aspartate 137, and asparagine 149. ATP-binding positions include 169–170 (TD) and 211–217 (TGGMGTK). A PUA domain is found at 275–353 (AGEITVDEGA…QQIDAILGYE (79 aa)).

This sequence belongs to the glutamate 5-kinase family.

It is found in the cytoplasm. It carries out the reaction L-glutamate + ATP = L-glutamyl 5-phosphate + ADP. Its pathway is amino-acid biosynthesis; L-proline biosynthesis; L-glutamate 5-semialdehyde from L-glutamate: step 1/2. Catalyzes the transfer of a phosphate group to glutamate to form L-glutamate 5-phosphate. The chain is Glutamate 5-kinase from Citrobacter koseri (strain ATCC BAA-895 / CDC 4225-83 / SGSC4696).